A 103-amino-acid chain; its full sequence is UPF0122 protein FN1394 (103 aa).

This sequence belongs to the UPF0122 family.

In terms of biological role, might take part in the signal recognition particle (SRP) pathway. This is inferred from the conservation of its genetic proximity to ftsY/ffh. May be a regulatory protein. The sequence is that of UPF0122 protein FN1394 from Fusobacterium nucleatum subsp. nucleatum (strain ATCC 25586 / DSM 15643 / BCRC 10681 / CIP 101130 / JCM 8532 / KCTC 2640 / LMG 13131 / VPI 4355).